Consider the following 216-residue polypeptide: Imidazole glycerol phosphate synthase subunit HisH (216 aa).

The Glutamine amidotransferase type-1 domain maps to 2–216 (RVAIIDYGSG…LIANFLKWKP (215 aa)). Residue Cys-88 is the Nucleophile of the active site. Residues His-196 and Glu-198 contribute to the active site.

As to quaternary structure, heterodimer of HisH and HisF.

It is found in the cytoplasm. The enzyme catalyses 5-[(5-phospho-1-deoxy-D-ribulos-1-ylimino)methylamino]-1-(5-phospho-beta-D-ribosyl)imidazole-4-carboxamide + L-glutamine = D-erythro-1-(imidazol-4-yl)glycerol 3-phosphate + 5-amino-1-(5-phospho-beta-D-ribosyl)imidazole-4-carboxamide + L-glutamate + H(+). It carries out the reaction L-glutamine + H2O = L-glutamate + NH4(+). It functions in the pathway amino-acid biosynthesis; L-histidine biosynthesis; L-histidine from 5-phospho-alpha-D-ribose 1-diphosphate: step 5/9. In terms of biological role, IGPS catalyzes the conversion of PRFAR and glutamine to IGP, AICAR and glutamate. The HisH subunit catalyzes the hydrolysis of glutamine to glutamate and ammonia as part of the synthesis of IGP and AICAR. The resulting ammonia molecule is channeled to the active site of HisF. This chain is Imidazole glycerol phosphate synthase subunit HisH, found in Brucella suis biovar 1 (strain 1330).